The following is a 309-amino-acid chain: 2-dehydro-3-deoxygluconokinase (309 aa).

Substrate is bound by residues 28–32 (GDTLN), tyrosine 88, 102–104 (YWR), and arginine 170. ATP contacts are provided by residues 168 to 170 (NYR), 228 to 233 (KRGADS), and 261 to 264 (AAGD). Aspartate 264 contacts substrate. The active-site Proton acceptor is aspartate 264.

It belongs to the carbohydrate kinase pfkB family.

The catalysed reaction is 2-dehydro-3-deoxy-D-gluconate + ATP = 2-dehydro-3-deoxy-6-phospho-D-gluconate + ADP + H(+). It participates in carbohydrate acid metabolism; 2-dehydro-3-deoxy-D-gluconate degradation; D-glyceraldehyde 3-phosphate and pyruvate from 2-dehydro-3-deoxy-D-gluconate: step 1/2. Catalyzes the phosphorylation of 2-keto-3-deoxygluconate (KDG) to produce 2-keto-3-deoxy-6-phosphogluconate (KDPG). The sequence is that of 2-dehydro-3-deoxygluconokinase (kdgK) from Escherichia coli (strain ATCC 9637 / CCM 2024 / DSM 1116 / LMG 11080 / NBRC 13500 / NCIMB 8666 / NRRL B-766 / W).